The chain runs to 154 residues: uncharacterized protein (154 aa).

The N-terminal stretch at 1-21 (MSISSGSFAQPAAVVSSPGVT) is a signal peptide.

The protein belongs to the ivy family.

Its subcellular location is the periplasm. This is an uncharacterized protein from Yersinia pestis.